Consider the following 136-residue polypeptide: Large ribosomal subunit protein uL16c (136 aa).

Positions 1–20 (MLSPKRTKFRKQHRGRMKGK) are disordered.

It belongs to the universal ribosomal protein uL16 family. As to quaternary structure, part of the 50S ribosomal subunit.

It is found in the plastid. The protein localises to the chloroplast. This Brachypodium distachyon (Purple false brome) protein is Large ribosomal subunit protein uL16c.